Consider the following 376-residue polypeptide: MEENLRIIISGGGTGGHIFPAVSIANAIKEQHPEAEILFVGAEGRMEMQRVPAAGYPIKGLPVAGFDRKNLLKNVSVLFKLVKSQLLARKIIKDFKPHAAVGVGGYASGPTLKMAGMMGIPTLIQEQNSYAGVTNKLLAKKACKICVAYDGMERFFEKDKIILTGNPVRQGLRNHHISREEAIRSFGLDPSKKTILIVGGSLGARTINNCVMEGLDKIKASGAQFIWQTGKIYIGEARAAVAQAGELPMLHVTDFISDMAAAYSAADLIISRAGAGSISEFCLLQKPVILVPSPNVAEDHQTKNALALVNKNAALYIKDAAAKEALLDKAVETVKQPETLKSLSTNIAKLAFTDSANVIAREVFKLADKYRKENGR.

UDP-N-acetyl-alpha-D-glucosamine is bound by residues 14–16 (TGG), Asn128, Arg169, Ser201, Ile256, and Gln301.

Belongs to the glycosyltransferase 28 family. MurG subfamily.

Its subcellular location is the cell inner membrane. The catalysed reaction is di-trans,octa-cis-undecaprenyl diphospho-N-acetyl-alpha-D-muramoyl-L-alanyl-D-glutamyl-meso-2,6-diaminopimeloyl-D-alanyl-D-alanine + UDP-N-acetyl-alpha-D-glucosamine = di-trans,octa-cis-undecaprenyl diphospho-[N-acetyl-alpha-D-glucosaminyl-(1-&gt;4)]-N-acetyl-alpha-D-muramoyl-L-alanyl-D-glutamyl-meso-2,6-diaminopimeloyl-D-alanyl-D-alanine + UDP + H(+). The protein operates within cell wall biogenesis; peptidoglycan biosynthesis. Functionally, cell wall formation. Catalyzes the transfer of a GlcNAc subunit on undecaprenyl-pyrophosphoryl-MurNAc-pentapeptide (lipid intermediate I) to form undecaprenyl-pyrophosphoryl-MurNAc-(pentapeptide)GlcNAc (lipid intermediate II). In Phocaeicola vulgatus (strain ATCC 8482 / DSM 1447 / JCM 5826 / CCUG 4940 / NBRC 14291 / NCTC 11154) (Bacteroides vulgatus), this protein is UDP-N-acetylglucosamine--N-acetylmuramyl-(pentapeptide) pyrophosphoryl-undecaprenol N-acetylglucosamine transferase.